A 156-amino-acid polypeptide reads, in one-letter code: Endoribonuclease YbeY (156 aa).

Residues H117, H121, and H127 each contribute to the Zn(2+) site.

The protein belongs to the endoribonuclease YbeY family. Zn(2+) serves as cofactor.

It is found in the cytoplasm. Its function is as follows. Single strand-specific metallo-endoribonuclease involved in late-stage 70S ribosome quality control and in maturation of the 3' terminus of the 16S rRNA. This chain is Endoribonuclease YbeY, found in Shewanella piezotolerans (strain WP3 / JCM 13877).